The chain runs to 177 residues: ADP-ribosylation factor-like protein 3 (177 aa).

A lipid anchor (N-myristoyl glycine) is attached at Gly2. GTP contacts are provided by residues 23–31 (GLDNAGKTT), 125–128 (NKQD), and Ala159.

This sequence belongs to the small GTPase superfamily. Arf family.

The protein resides in the golgi apparatus membrane. Its subcellular location is the cytoplasm. It is found in the cytoskeleton. The protein localises to the spindle. It localises to the nucleus. The protein resides in the microtubule organizing center. Its function is as follows. Small GTP-binding protein which cycles between an inactive GDP-bound and an active GTP-bound form, and the rate of cycling is regulated by guanine nucleotide exchange factors (GEF) and GTPase-activating proteins (GAP). Required for normal cytokinesis and cilia signaling. Required for targeting proteins to the ciliary membrane by releasing myristoylated protein from unc119 cargo adapters into the cilium. The protein is ADP-ribosylation factor-like protein 3 of Chlamydomonas reinhardtii (Chlamydomonas smithii).